Here is a 384-residue protein sequence, read N- to C-terminus: Spermidine/putrescine import ATP-binding protein PotA (384 aa).

The 235-residue stretch at 26–260 (ISLEKVSKTY…PATRFVAGFI (235 aa)) folds into the ABC transporter domain. 62-69 (GPSGCGKT) lines the ATP pocket.

It belongs to the ABC transporter superfamily. Spermidine/putrescine importer (TC 3.A.1.11.1) family. In terms of assembly, the complex is composed of two ATP-binding proteins (PotA), two transmembrane proteins (PotB and PotC) and a solute-binding protein (PotD).

It localises to the cell membrane. It carries out the reaction ATP + H2O + polyamine-[polyamine-binding protein]Side 1 = ADP + phosphate + polyamineSide 2 + [polyamine-binding protein]Side 1.. Part of the ABC transporter complex PotABCD involved in spermidine/putrescine import. Responsible for energy coupling to the transport system. The sequence is that of Spermidine/putrescine import ATP-binding protein PotA from Thermobifida fusca (strain YX).